The following is a 348-amino-acid chain: Protein RecA (348 aa).

66-73 (GPESSGKT) serves as a coordination point for ATP.

It belongs to the RecA family.

The protein localises to the cytoplasm. Can catalyze the hydrolysis of ATP in the presence of single-stranded DNA, the ATP-dependent uptake of single-stranded DNA by duplex DNA, and the ATP-dependent hybridization of homologous single-stranded DNAs. It interacts with LexA causing its activation and leading to its autocatalytic cleavage. This is Protein RecA from Legionella pneumophila (strain Lens).